The sequence spans 224 residues: UPF0758 protein CV_3079 (224 aa).

The 123-residue stretch at 102-224 (ALSSPQQVRD…AESFAERGWL (123 aa)) folds into the MPN domain. Residues His-173, His-175, and Asp-186 each contribute to the Zn(2+) site. A JAMM motif motif is present at residues 173–186 (HNHPSGVSEPSSAD).

This sequence belongs to the UPF0758 family.

The polypeptide is UPF0758 protein CV_3079 (Chromobacterium violaceum (strain ATCC 12472 / DSM 30191 / JCM 1249 / CCUG 213 / NBRC 12614 / NCIMB 9131 / NCTC 9757 / MK)).